The chain runs to 231 residues: NADH-ubiquinone oxidoreductase chain 4 (231 aa).

A run of 7 helical transmembrane segments spans residues 1–21 (PIAG…YGII), 34–54 (MFLP…LTCL), 63–85 (IAYS…TPWG), 89–111 (AMAL…NTTY), 128–148 (ILPM…ATPP), 169–189 (TIIL…HMFL), and 211–231 (LLMT…ELVI).

It belongs to the complex I subunit 4 family.

It is found in the mitochondrion membrane. It carries out the reaction a ubiquinone + NADH + 5 H(+)(in) = a ubiquinol + NAD(+) + 4 H(+)(out). Its function is as follows. Core subunit of the mitochondrial membrane respiratory chain NADH dehydrogenase (Complex I) that is believed to belong to the minimal assembly required for catalysis. Complex I functions in the transfer of electrons from NADH to the respiratory chain. The immediate electron acceptor for the enzyme is believed to be ubiquinone. This is NADH-ubiquinone oxidoreductase chain 4 (MT-ND4) from Porthidium ophryomegas (Slender hognose viper).